The following is a 518-amino-acid chain: GRIN2-like protein (518 aa).

Disordered stretches follow at residues 1–23 (MGLE…QSRT) and 467–500 (QTEP…FRTM). A compositionally biased stretch (basic and acidic residues) spans 476-494 (KSDEDPLNKEPSSDKMEKK).

In terms of assembly, may interact with GNAO1.

In terms of biological role, may be involved in neurite outgrowth. The chain is GRIN2-like protein from Gallus gallus (Chicken).